A 788-amino-acid polypeptide reads, in one-letter code: Leucine-rich repeat and fibronectin type-III domain-containing protein 2 (788 aa).

Residues 1–20 (METLLGGLLAFGMAFAVVDA) form the signal peptide. The LRRNT domain maps to 21–52 (CPKYCVCQNLSESLGTLCPSKGLLFVPPDIDR). The Extracellular segment spans residues 21–534 (CPKYCVCQNL…MHSQILGGTM (514 aa)). 2 N-linked (GlcNAc...) asparagine glycosylation sites follow: Asn-29 and Asn-74. LRR repeat units follow at residues 53–74 (RTVE…DFAN), 77–98 (GLVD…SFLD), 101–122 (SLRS…TLRG), 125–146 (NLQH…AFED), 150–171 (TLED…SVRR), 174–195 (NLHQ…TFAD), and 198–219 (KLAR…PIFA). Residues 242–288 (NPLHCNCELLWLRRLERDDDLKTCGSPGGLKGRYFWHIREEEFVCEP) enclose the LRRCT domain. In terms of domain architecture, Ig-like spans 289 to 375 (PLITQHTHKL…GEATATVEVS (87 aa)). A disulfide bridge connects residues Cys-310 and Cys-359. N-linked (GlcNAc...) asparagine glycans are attached at residues Asn-332, Asn-341, Asn-384, and Asn-457. A disordered region spans residues 383-423 (SNSTSRMAPPKSRLSDITGSSKTSRGGGGSGAGEPPKSTPE). The 97-residue stretch at 422-518 (PERAVLVSDV…GCAQFFTKAD (97 aa)) folds into the Fibronectin type-III domain. The chain crosses the membrane as a helical span at residues 535 to 555 (ILVIGGIIVATLLVFIVILMV). Topologically, residues 556-788 (RYKVCNHDAP…SSEWVMESTV (233 aa)) are cytoplasmic. Residues 620–641 (CDSSSSSSLGSGEAAGLSRGPW) show a composition bias toward low complexity. Disordered stretches follow at residues 620–655 (CDSS…PSLD) and 668–707 (SQRK…ATRA). Residues 642–651 (RLPPPAPRPK) are compositionally biased toward pro residues. The short motif at 785–788 (ESTV) is the PDZ-binding element.

This sequence belongs to the LRFN family. As to quaternary structure, forms heteromeric complexes with LRFN1, LRFN3 and LRFN4. Can form homomeric complexes, but not across cell junctions. Can form heteromeric complexes with LRFN5. Interacts with DLG1, DLG3 and DLG4; interaction with DLG4 is mediated by the PDZ-binding domain. Also interacts with DLG2. Interacts with 2 NMDA receptor subunits GRIN1 and GRIN2A.

The protein resides in the membrane. The protein localises to the synapse. Its subcellular location is the postsynaptic cell membrane. Functionally, promotes neurite outgrowth in hippocampal neurons. Enhances the cell surface expression of GRIN1 and GRIN2A NMDA receptor subunits. May play a role in redistributing DLG4 to the cell periphery. In Rattus norvegicus (Rat), this protein is Leucine-rich repeat and fibronectin type-III domain-containing protein 2 (Lrfn2).